A 208-amino-acid polypeptide reads, in one-letter code: Small ribosomal subunit protein uS4 (208 aa).

The S4 RNA-binding domain maps to 97-160; that stretch reads TRLDNVCYRM…QKQLRVQEAL (64 aa).

This sequence belongs to the universal ribosomal protein uS4 family. As to quaternary structure, part of the 30S ribosomal subunit. Contacts protein S5. The interaction surface between S4 and S5 is involved in control of translational fidelity.

Functionally, one of the primary rRNA binding proteins, it binds directly to 16S rRNA where it nucleates assembly of the body of the 30S subunit. In terms of biological role, with S5 and S12 plays an important role in translational accuracy. The sequence is that of Small ribosomal subunit protein uS4 from Xanthomonas oryzae pv. oryzae (strain MAFF 311018).